A 425-amino-acid chain; its full sequence is Enolase (425 aa).

Position 163 (Q163) interacts with (2R)-2-phosphoglycerate. E205 (proton donor) is an active-site residue. Mg(2+) is bound by residues D242, E285, and D312. 4 residues coordinate (2R)-2-phosphoglycerate: K337, R366, S367, and K388. The Proton acceptor role is filled by K337.

It belongs to the enolase family. Mg(2+) serves as cofactor.

Its subcellular location is the cytoplasm. The protein resides in the secreted. It localises to the cell surface. It carries out the reaction (2R)-2-phosphoglycerate = phosphoenolpyruvate + H2O. The protein operates within carbohydrate degradation; glycolysis; pyruvate from D-glyceraldehyde 3-phosphate: step 4/5. In terms of biological role, catalyzes the reversible conversion of 2-phosphoglycerate (2-PG) into phosphoenolpyruvate (PEP). It is essential for the degradation of carbohydrates via glycolysis. In Paracoccus denitrificans (strain Pd 1222), this protein is Enolase.